A 74-amino-acid polypeptide reads, in one-letter code: DNA-directed RNA polymerase subunit omega (74 aa).

The protein belongs to the RNA polymerase subunit omega family. In terms of assembly, the RNAP catalytic core consists of 2 alpha, 1 beta, 1 beta' and 1 omega subunit. When a sigma factor is associated with the core the holoenzyme is formed, which can initiate transcription.

The catalysed reaction is RNA(n) + a ribonucleoside 5'-triphosphate = RNA(n+1) + diphosphate. Functionally, promotes RNA polymerase assembly. Latches the N- and C-terminal regions of the beta' subunit thereby facilitating its interaction with the beta and alpha subunits. This Helicobacter acinonychis (strain Sheeba) protein is DNA-directed RNA polymerase subunit omega.